A 544-amino-acid polypeptide reads, in one-letter code: Membrane protein insertase YidC (544 aa).

The next 5 helical transmembrane spans lie at 13 to 33 (LSLF…SNIL), 343 to 363 (WGLS…PLTF), 409 to 429 (LGGC…YSLV), 461 to 481 (LYFV…FTQL), and 506 to 526 (MPIM…IYWI).

This sequence belongs to the OXA1/ALB3/YidC family. Type 1 subfamily. As to quaternary structure, interacts with the Sec translocase complex via SecD. Specifically interacts with transmembrane segments of nascent integral membrane proteins during membrane integration.

The protein localises to the cell inner membrane. Its function is as follows. Required for the insertion and/or proper folding and/or complex formation of integral membrane proteins into the membrane. Involved in integration of membrane proteins that insert both dependently and independently of the Sec translocase complex, as well as at least some lipoproteins. Aids folding of multispanning membrane proteins. This is Membrane protein insertase YidC from Borreliella burgdorferi (strain ZS7) (Borrelia burgdorferi).